Consider the following 304-residue polypeptide: Dermonecrotic toxin LiSicTox-betaIA1ii (304 aa).

Positions 1–21 (MLLCAVISFIVYAVFLQEANG) are cleaved as a signal peptide. A propeptide spanning residues 22 to 26 (HAAER) is cleaved from the precursor. His38 is a catalytic residue. Residues Glu58 and Asp60 each coordinate Mg(2+). His74 acts as the Nucleophile in catalysis. 2 disulfide bridges follow: Cys78–Cys84 and Cys80–Cys223. Asp118 lines the Mg(2+) pocket.

It belongs to the arthropod phospholipase D family. Class II subfamily. Mg(2+) is required as a cofactor. As to expression, expressed by the venom gland.

Its subcellular location is the secreted. It carries out the reaction an N-(acyl)-sphingosylphosphocholine = an N-(acyl)-sphingosyl-1,3-cyclic phosphate + choline. The catalysed reaction is an N-(acyl)-sphingosylphosphoethanolamine = an N-(acyl)-sphingosyl-1,3-cyclic phosphate + ethanolamine. The enzyme catalyses a 1-acyl-sn-glycero-3-phosphocholine = a 1-acyl-sn-glycero-2,3-cyclic phosphate + choline. It catalyses the reaction a 1-acyl-sn-glycero-3-phosphoethanolamine = a 1-acyl-sn-glycero-2,3-cyclic phosphate + ethanolamine. Its function is as follows. Dermonecrotic toxins cleave the phosphodiester linkage between the phosphate and headgroup of certain phospholipids (sphingolipid and lysolipid substrates), forming an alcohol (often choline) and a cyclic phosphate. This toxin acts on sphingomyelin (SM) with low activity. It may also act on ceramide phosphoethanolamine (CPE), lysophosphatidylcholine (LPC) and lysophosphatidylethanolamine (LPE), but not on lysophosphatidylserine (LPS), and lysophosphatidylglycerol (LPG). It acts by transphosphatidylation, releasing exclusively cyclic phosphate products as second products. Induces dermonecrosis, hemolysis, increased vascular permeability, edema, inflammatory response, and platelet aggregation. This Loxosceles intermedia (Brown spider) protein is Dermonecrotic toxin LiSicTox-betaIA1ii.